A 353-amino-acid chain; its full sequence is Ferredoxin--NADP reductase 1 (353 aa).

7 residues coordinate FAD: Asp-43, Gln-51, Tyr-56, Ala-96, Phe-135, Asp-300, and Ser-341.

It belongs to the ferredoxin--NADP reductase type 2 family. As to quaternary structure, homodimer. FAD serves as cofactor.

It catalyses the reaction 2 reduced [2Fe-2S]-[ferredoxin] + NADP(+) + H(+) = 2 oxidized [2Fe-2S]-[ferredoxin] + NADPH. The sequence is that of Ferredoxin--NADP reductase 1 from Cupriavidus metallidurans (strain ATCC 43123 / DSM 2839 / NBRC 102507 / CH34) (Ralstonia metallidurans).